Reading from the N-terminus, the 319-residue chain is Urease accessory protein UreD (319 aa).

The disordered stretch occupies residues 284–319; sequence RLSTPQPPREWPLQEEGTFSNERFTKDHQSPSASPH.

The protein belongs to the UreD family. UreD, UreF and UreG form a complex that acts as a GTP-hydrolysis-dependent molecular chaperone, activating the urease apoprotein by helping to assemble the nickel containing metallocenter of UreC. The UreE protein probably delivers the nickel.

The protein resides in the cytoplasm. Its function is as follows. Required for maturation of urease via the functional incorporation of the urease nickel metallocenter. The sequence is that of Urease accessory protein UreD from Prochlorococcus marinus (strain MIT 9313).